A 427-amino-acid polypeptide reads, in one-letter code: 3-phosphoshikimate 1-carboxyvinyltransferase (427 aa).

3-phosphoshikimate contacts are provided by K20, S21, and R25. Position 20 (K20) interacts with phosphoenolpyruvate. Residues G92 and R120 each coordinate phosphoenolpyruvate. 3-phosphoshikimate contacts are provided by S166, Q168, D312, and K339. Q168 contacts phosphoenolpyruvate. Catalysis depends on D312, which acts as the Proton acceptor. Phosphoenolpyruvate-binding residues include R343 and R385.

It belongs to the EPSP synthase family. As to quaternary structure, monomer.

Its subcellular location is the cytoplasm. The catalysed reaction is 3-phosphoshikimate + phosphoenolpyruvate = 5-O-(1-carboxyvinyl)-3-phosphoshikimate + phosphate. It functions in the pathway metabolic intermediate biosynthesis; chorismate biosynthesis; chorismate from D-erythrose 4-phosphate and phosphoenolpyruvate: step 6/7. Functionally, catalyzes the transfer of the enolpyruvyl moiety of phosphoenolpyruvate (PEP) to the 5-hydroxyl of shikimate-3-phosphate (S3P) to produce enolpyruvyl shikimate-3-phosphate and inorganic phosphate. The protein is 3-phosphoshikimate 1-carboxyvinyltransferase of Streptococcus equi subsp. zooepidemicus (strain MGCS10565).